Here is a 588-residue protein sequence, read N- to C-terminus: Protein decapentaplegic (588 aa).

An N-terminal signal peptide occupies residues 1–23; that stretch reads MRAWLLLLAVLATFQTIVRVAST. Positions 24-456 are excised as a propeptide; the sequence is EDISQRFIAA…DGRHKARSIR (433 aa). Residues 74 to 169 are disordered; sequence FSEPASFSDS…STESHQSSSI (96 aa). Over residues 96–119 the composition is skewed to basic and acidic residues; it reads SKSDANRQFNEVHKPRTDQLENSK. N-linked (GlcNAc...) asparagine glycosylation is present at Asn120. Positions 140–153 are enriched in basic residues; the sequence is RSHHKKSHHHRSHQ. A compositionally biased stretch (low complexity) spans 156–169; that stretch reads QASASTESHQSSSI. Asn342 and Asn377 each carry an N-linked (GlcNAc...) asparagine glycan. The segment at 454-484 is disordered; that stretch reads SIRDVSGGEGGGKGGRNKRQPRRPTRRKNHD. Residues 468–481 are compositionally biased toward basic residues; it reads GRNKRQPRRPTRRK. 3 cysteine pairs are disulfide-bonded: Cys487–Cys553, Cys516–Cys585, and Cys520–Cys587. Asn529 carries an N-linked (GlcNAc...) asparagine glycan.

It belongs to the TGF-beta family. Heterodimers of scw/dpp are the active subunit, dpp/dpp homodimers elicit a basal response and scw/scw homodimers alone are ineffective in specifying a dorsal pattern. Component of a complex composed of dpp, sog and tsg. Interacts with nord and gbb; the interaction interferes with dpp secretion. As to expression, expressed in the dorsal region of the embryo, and becomes enriched in a dorsal midline stripe just prior to gastrulation. Expressed in midgut mesoderm and in two overlapping regions of the embryonic large intestine. Expressed in a long-range concentration gradient in the wing imaginal disk.

It is found in the secreted. In terms of biological role, required during oogenesis for eggshell patterning and dorsal/ventral patterning of the embryo. Acts as a morphogen during embryogenesis to pattern the dorsal/ventral axis, specifying dorsal ectoderm and amnioserosa cell fate within the dorsal half of the embryo; this activity is antagonized by binding to sog and tsg. Induces the formation of visceral mesoderm and the heart in early embryos. Required later in embryogenesis for dorsal closure and patterning of the hindgut. Also functions postembryonically as a long-range morphogen during imaginal disk development; is responsible for the progression of the morphogenetic furrow during eye development. Patterns the wing imaginal disk along its anterior/posterior axis and has a role in positioning pro-veins. Also required to subdivide the wing disk along the proximal/distal axis into body wall (notum) and wing. Ensures the correct architecture of wing epithelial cells. Has multiple roles in the developing tracheal system, controlling directed tracheal cell migration during embryogenesis and later specifying the fate of fusion cells in the tracheal branches. Required for viability of larvae. Essential for the maintenance and division of germline stem cells in the ovary. Signals via the type I receptor tkv, the type II receptor punt, and in some tissues via the type I receptor sax, in a signaling cascade that leads to activation and repression of target genes. The chain is Protein decapentaplegic (dpp) from Drosophila melanogaster (Fruit fly).